The primary structure comprises 809 residues: Trimethylamine-N-oxide reductase 2 (809 aa).

The tat-type signal signal peptide spans 1–31 (MTLTRREFIKHSGIAAGALVVTSAAPLPAWA). Ser176 provides a ligand contact to Mo-bis(molybdopterin guanine dinucleotide).

The protein belongs to the prokaryotic molybdopterin-containing oxidoreductase family. Requires Mo-bis(molybdopterin guanine dinucleotide) as cofactor. Post-translationally, predicted to be exported by the Tat system. The position of the signal peptide cleavage has not been experimentally proven.

It is found in the periplasm. The catalysed reaction is trimethylamine + 2 Fe(III)-[cytochrome c] + H2O = trimethylamine N-oxide + 2 Fe(II)-[cytochrome c] + 3 H(+). Functionally, reduces trimethylamine-N-oxide (TMAO) into trimethylamine; an anaerobic reaction coupled to energy-yielding reactions. Can also reduce other N- and S-oxide compounds such as 4-methylmorpholine-N-oxide and biotin sulfoxide (BSO), but with a lower catalytic efficiency. This chain is Trimethylamine-N-oxide reductase 2 (torZ), found in Escherichia coli O157:H7.